A 529-amino-acid chain; its full sequence is MQQRRPVRRALLSVSDKAGIIEFAQALSARGVELLSTGGTARLLAEKGLAVTEVSDYTGFPEMMDGRVKTLHPKVHGGILGRRGQDDAIMEQHHIAPIDMVVVNLYPFAETVARVGCSLEDAVENIDIGGPTMVRSAAKNHKDVAIVVKSSDYDAIIKEMDANEGSLTLDTRFDLSIKAFEHTAAYDSMIANYFGSMVPAYHGESKEAAGRFPRTLNLNFIKKQDMRYGENSHQQAAFYIEENVKEASVATAQQVQGKALSYNNIADTDAALECVKAFNEPACVIVKHANPCGVAVSTSILDAYDRAYKTDPTSAFGGIIAFNRELDAETAQAIISRQFVEVIIAPSATEEALKITAAKQNVRVLTCGQWAQRVPGLDFKRVNGGLLVQDRDLGMVSEAELRVVSKRQPTEQELRDALFCWKVAKFVKSNAIVYAKENMTIGIGAGQMSRVYSAKIAGIKAADEGLEVKGSAMASDAFFPFRDGIDAAAAVGVSCVIQPGGSIRDDEVIAAADEHGIAMIFTDMRHFRH.

The MGS-like domain maps to 1–148 (MQQRRPVRRA…KNHKDVAIVV (148 aa)).

The protein belongs to the PurH family.

It carries out the reaction (6R)-10-formyltetrahydrofolate + 5-amino-1-(5-phospho-beta-D-ribosyl)imidazole-4-carboxamide = 5-formamido-1-(5-phospho-D-ribosyl)imidazole-4-carboxamide + (6S)-5,6,7,8-tetrahydrofolate. The catalysed reaction is IMP + H2O = 5-formamido-1-(5-phospho-D-ribosyl)imidazole-4-carboxamide. The protein operates within purine metabolism; IMP biosynthesis via de novo pathway; 5-formamido-1-(5-phospho-D-ribosyl)imidazole-4-carboxamide from 5-amino-1-(5-phospho-D-ribosyl)imidazole-4-carboxamide (10-formyl THF route): step 1/1. It functions in the pathway purine metabolism; IMP biosynthesis via de novo pathway; IMP from 5-formamido-1-(5-phospho-D-ribosyl)imidazole-4-carboxamide: step 1/1. The sequence is that of Bifunctional purine biosynthesis protein PurH from Salmonella enteritidis PT4 (strain P125109).